Reading from the N-terminus, the 773-residue chain is Tyrosine kinase receptor Cad96Ca (773 aa).

The N-terminal stretch at 1–48 (MVYHHHNHESRIIHCRKQLTSWRRRSLLLTIIVVTATVVSLISQEAEA) is a signal peptide. The Extracellular portion of the chain corresponds to 49-315 (HNQNAPPILY…ITIFSLKSGT (267 aa)). One can recognise a Cadherin domain in the interval 58–172 (YVRERNWRIS…ENSSGYRPQT (115 aa)). 3 N-linked (GlcNAc...) asparagine glycosylation sites follow: N126, N164, and N180. Residues 196-302 (SIRNGLPNSR…TPSGGHHNNS (107 aa)) form a disordered region. Pro residues predominate over residues 209 to 235 (WYPPVPQNNIFGPPPFGNNYPPPPPNI). A compositionally biased stretch (acidic residues) spans 243-253 (SGEEEQPDEEV). Polar residues-rich tracts occupy residues 254 to 283 (TPTTPVRISSTTPKSRTKLTPITANNSTRV) and 290 to 302 (ETTTPSGGHHNNS). Residues N278, N279, N300, and N301 are each glycosylated (N-linked (GlcNAc...) asparagine). A helical membrane pass occupies residues 316–336 (IPIVVTVGGFFVAIAVLLAYL). At 337 to 773 (CRRRLCAISR…NIVSLSGEKL (437 aa)) the chain is on the cytoplasmic side. Disordered regions lie at residues 352–373 (KEKEELAKKSNQSQLSSTLTDD) and 411–447 (TGVTNGGVSSPGVPSPGTGEPGSNLGPGCLTGGAGSS). Positions 361–373 (SNQSQLSSTLTDD) are enriched in polar residues. Positions 411–433 (TGVTNGGVSSPGVPSPGTGEPGS) are enriched in low complexity. The region spanning 470 to 749 (LKFFNILGEG…MLDKLLHTEM (280 aa)) is the Protein kinase domain. ATP-binding positions include 476 to 484 (LGEGAFGQV) and K504. The active-site Proton acceptor is the D610.

It belongs to the protein kinase superfamily. Tyr protein kinase family. Fibroblast growth factor receptor subfamily.

It localises to the membrane. It catalyses the reaction L-tyrosyl-[protein] + ATP = O-phospho-L-tyrosyl-[protein] + ADP + H(+). The chain is Tyrosine kinase receptor Cad96Ca (Cad96Ca) from Drosophila melanogaster (Fruit fly).